A 332-amino-acid chain; its full sequence is Nucleotide-binding protein RC1_2868 (332 aa).

The disordered stretch occupies residues 1–27 (MTGQPLTMETAAGADAGTGAATHPADG). The span at 10 to 22 (TAAGADAGTGAAT) shows a compositional bias: low complexity. 36-43 (GMSGGGLS) is an ATP binding site. Residue 82–85 (DSRT) participates in GTP binding. Basic and acidic residues-rich tracts occupy residues 302-312 (GHRDLDRRHPA) and 322-332 (VASRETPEEHR). A disordered region spans residues 302 to 332 (GHRDLDRRHPAPEPAPPWREVASRETPEEHR).

This sequence belongs to the RapZ-like family.

Displays ATPase and GTPase activities. This chain is Nucleotide-binding protein RC1_2868, found in Rhodospirillum centenum (strain ATCC 51521 / SW).